The sequence spans 514 residues: Histidine ammonia-lyase (514 aa).

Residues 147-149 (ASG) constitute a cross-link (5-imidazolinone (Ala-Gly)). Ser148 is subject to 2,3-didehydroalanine (Ser).

Belongs to the PAL/histidase family. Post-translationally, contains an active site 4-methylidene-imidazol-5-one (MIO), which is formed autocatalytically by cyclization and dehydration of residues Ala-Ser-Gly.

The protein resides in the cytoplasm. The catalysed reaction is L-histidine = trans-urocanate + NH4(+). It participates in amino-acid degradation; L-histidine degradation into L-glutamate; N-formimidoyl-L-glutamate from L-histidine: step 1/3. The chain is Histidine ammonia-lyase from Gloeobacter violaceus (strain ATCC 29082 / PCC 7421).